The chain runs to 375 residues: Putative type I specificity subunit S.MpnORF638P (375 aa).

It belongs to the type-I restriction system S methylase family. As to quaternary structure, the methyltransferase is composed of M and S polypeptides.

Its function is as follows. The specificity (S) subunit of a type I methyltransferase (MTase); this subunit dictates DNA sequence specificity. The single R subunit has multiple frameshifts and is probably not expressed. The protein is Putative type I specificity subunit S.MpnORF638P of Mycoplasma pneumoniae (strain ATCC 29342 / M129 / Subtype 1) (Mycoplasmoides pneumoniae).